The following is a 491-amino-acid chain: Inositol-pentakisphosphate 2-kinase (491 aa).

The short motif at 136–140 is the EXKPK motif element; sequence EIKPK. Serine 282 carries the phosphoserine modification.

It belongs to the IPK1 type 2 family. Ubiquitously expressed, with high expression in heart, brain, testis and placenta.

It is found in the cytoplasm. The protein localises to the nucleus. It carries out the reaction 1D-myo-inositol 1,3,4,5,6-pentakisphosphate + ATP = 1D-myo-inositol hexakisphosphate + ADP + H(+). Its function is as follows. Phosphorylates Ins(1,3,4,5,6)P5 at position 2 to form Ins(1,2,3,4,5,6)P6 (InsP6 or phytate). InsP6 is involved in many processes such as mRNA export, non-homologous end-joining, endocytosis, ion channel regulation. It also protects cells from TNF-alpha-induced apoptosis. This is Inositol-pentakisphosphate 2-kinase (IPPK) from Homo sapiens (Human).